The following is a 192-amino-acid chain: Putative cyclic ADP-D-ribose synthase ThsB1 (192 aa).

The protein belongs to the Thoeris B TIR-like family. In terms of assembly, monomer; not seen to interact with ThsA.

The protein resides in the cytoplasm. Its activity is regulated as follows. Activated upon phage infection. TIR-like domain-containing component of the Thoeris antiviral defense system, composed of ThsA and ThsB. Expression of ThsA and ThsB in B.subtilis (strain BEST7003) confers resistance to phages SBSphiC, SBSphiJ and SPO1. Phage infection activates this protein so that 30 to 45 minutes post-infection with phage SPO1 it generates a signal molecule that in turn activates the NAD(+) hydrolase activity of ThsA. The signal is similar to cyclic ADP-D-ribose, but how it differs is unknown. In vitro purified (but unactivated) ThsB has no NAD(+) hydrolyzing activity, no activity on AMP, CMP, GMP or UMP, does not alter the activity of ThsA, does not bind DNA. Hydrolyzes NAD(+) to make a cyclic ADP-D-ribose (cADPR) signaling molecule; might make 3'cADPR. In Bacillus cereus (strain MSX-D12), this protein is Putative cyclic ADP-D-ribose synthase ThsB1.